Reading from the N-terminus, the 270-residue chain is MQCWIRQTINFFRKTKNTEKLTALLQQKEDILAVEMPVSLVYNGISHAVMMCSPNNLEDFALGFSITEGIIDKPEDIYGIDVVEVCNGIEVQIELSSRKFMALKEHRRNLTGRTGCGICGTEQLNQVYKTFPKLDCTFQFDLNLLDSCLIDLQKNQLLGCKTGATHACAFFDLYGNMLAIYEDVGRHVALDKLLGWHAKSGKPRGFILASSRASYEMVQKTVACGVEMLVTISAATDLAVTMAEKHNLTLIGFAREGKGNIYSGHQRLHN.

Residue Cys-116 is the Cysteine persulfide intermediate of the active site. 253–258 serves as a coordination point for Mo-bis(molybdopterin guanine dinucleotide); sequence FAREGK.

This sequence belongs to the FdhD family.

The protein localises to the cytoplasm. Its function is as follows. Required for formate dehydrogenase (FDH) activity. Acts as a sulfur carrier protein that transfers sulfur from IscS to the molybdenum cofactor prior to its insertion into FDH. In Haemophilus influenzae (strain 86-028NP), this protein is Sulfur carrier protein FdhD.